Consider the following 55-residue polypeptide: Large ribosomal subunit protein bL33 (55 aa).

Residues 1–11 (MAKGGREKIKL) show a composition bias toward basic and acidic residues. Residues 1–29 (MAKGGREKIKLESTAGTGHFYTTTKNKKT) are disordered. The segment covering 14 to 24 (TAGTGHFYTTT) has biased composition (polar residues).

The protein belongs to the bacterial ribosomal protein bL33 family.

This Thiobacillus denitrificans (strain ATCC 25259 / T1) protein is Large ribosomal subunit protein bL33.